A 102-amino-acid chain; its full sequence is Small ribosomal subunit protein bS6 (102 aa).

The protein belongs to the bacterial ribosomal protein bS6 family.

Binds together with bS18 to 16S ribosomal RNA. The protein is Small ribosomal subunit protein bS6 of Solidesulfovibrio magneticus (strain ATCC 700980 / DSM 13731 / RS-1) (Desulfovibrio magneticus).